A 150-amino-acid polypeptide reads, in one-letter code: uncharacterized protein (150 aa).

A run of 4 helical transmembrane segments spans residues 32–52, 64–84, 94–114, and 123–143; these read ILYGLIAIFSAMLLTSLAVSL, FNWLITAISFLSLFIGGFISG, IGALTALSFSLIILLFQYLGF, and LIFHLGFLGVCMLGGIFGVNM.

It localises to the cell membrane. This is an uncharacterized protein from Bacillus subtilis (strain 168).